The chain runs to 435 residues: Prenyltransferase nanD (435 aa).

Glu-101 is a binding site for substrate. 3 residues coordinate dimethylallyl diphosphate: Arg-114, Lys-202, and Tyr-204. Tyr-206 is a substrate binding site. 5 residues coordinate dimethylallyl diphosphate: Lys-280, Tyr-282, Tyr-364, Tyr-429, and Tyr-433.

Belongs to the tryptophan dimethylallyltransferase family.

It functions in the pathway secondary metabolite biosynthesis. Prenyltransferase; part of the gene cluster that mediates the biosynthesis of the benzazepine alkaloid nanangelenin A which contains an unprecedented 3,4-dihydro-1-benzazepine-2,5-dione-N-prenyl-N-acetoxy-anthranilamide scaffold. The first step of nanangelenin biosynthesis is catalyzed by the indoleamine 2,3-dioxygenase nanC which produces N-formyl-kynurenine through the catabolism of tryptophan. The two-module NRPS nanA then utilizes anthranilate (Ant) and L-kynurenine (L-Kyn) to assemble the dipeptide product nanangelenin B. The first adenylation domain of nanA (A1) loads anthranilate onto the T1 domain, while A2 loads kynurenine, generated through spontaneous nonenzymatic deformylation of the nanC-supplied N-formyl-kynurenine. The peptide bond formation between the tethered amino acids is catalyzed by the first condensation domain (C1) between anthranilate's carbonyl carbon and kynurenine's aliphatic primary amine. The second C domain (C2) catalyzes the final cyclization event between the aromatic amine of kynurenine and the tethered carbonyl carbon, yielding nanangelenin B. The terminal T3 domain enhances the catalytic efficiency of C2, suggesting the T2-tethered Ant-L-Kyn is transferred to T3 prior to cyclization by C2. Once released from nanA, nanangelenin B is then prenylated by the prenyltransferase nanD to form nanangelenin C. Nanangelenin C is then N-hydroxylated by the FAD-dependent monooxygenase nanF and further acetylated by the acetyltransferase nanB to yield nanangelenin F. Finally, the N-methyltransferase nanE methylates the amide nitrogen of 1-benzazepine to convert nanangelenin F into nanangelenin A. NanE is also able to methylate most of the intermediates of the pathway such as nanangelenin B and nanangelenin C to produce nanangelenin D and nanangelenin E, respectively. The chain is Prenyltransferase nanD from Aspergillus nanangensis.